A 455-amino-acid polypeptide reads, in one-letter code: MATIPIRLQALATDQTVLKLPHPYKTEFAVRKASKASTKLPVYNLVPKPFPTRPLPFELHNDHLVFTDAIHLKSSELPPDSNNGAWARARRAPCVTLYWDGVEVPTLKQAWLVVYAFFTMRPGMDSFRLELDGNSAANLARQIKDVLLGIDHPIKARQQQEPCAKTKENTLLILRSTFWQGAGCPFGPRPVWCPQESPSSLLPSTCLSSFPLAPFHRTSTISLAGDPEDFDRCQQSWHPIRPAKPAPGSIIYSRWIPYLGEMFSMVALDPEDSEHVRLFHEWQSDPRVLQGWTETKTLDQHRRYLEALHKDPHQLTVLAKWDDSPFAYFELYWAKENRLGGYIDAGDFDRGRHSFVGDVRFRGPLRVSAWWSSLMHYLFLDDPRTMHIVGEPRDTHSTVLMYDFIHGFGLDRFIDLPSKRSAFMRCSRDRFFQSFPLEDSEKVIGGTSIRVVQKL.

The protein belongs to the lysine N-acyltransferase MbtK family.

The protein operates within mycotoxin biosynthesis. Its function is as follows. Putative O-acetyltransferase; part of the satratoxin SC2 cluster involved in the biosynthesis of satratoxins, trichothecene mycotoxins that are associated with human food poisonings. Satratoxins are suggested to be made by products of multiple gene clusters (SC1, SC2 and SC3) that encode 21 proteins in all, including polyketide synthases, acetyltransferases, and other enzymes expected to modify the trichothecene skeleton. SC1 encodes 10 proteins, SAT1 to SAT10. The largest are SAT8, which encodes a putative polyketide synthase (PKS) with a conventional non-reducing architecture, and SAT10, a putative protein containing four ankyrin repeats and thus may be involved in protein scaffolding. The putative short-chain reductase SAT3 may assist the PKS in some capacity. SAT6 contains a secretory lipase domain and acts probably as a trichothecene esterase. SAT5 encodes a putative acetyltransferase, and so, with SAT6, may affect endogenous protection from toxicity. The probable transcription factor SAT9 may regulate the expression of the SC1 cluster. SC2 encodes proteins SAT11 to SAT16, the largest of which encodes the putative reducing PKS SAT13. SAT11 is a cytochrome P450 monooxygenase, while SAT14 and SAT16 are probable acetyltransferases. The SC2 cluster may be regulated by the transcription factor SAT15. SC3 is a small cluster that encodes 5 proteins, SAT17 to SAT21. SAT21 is a putative MFS-type transporter which may have a role in exporting secondary metabolites. The four other proteins putatively encoded in SC3 include the taurine hydroxylase-like protein SAT17, the O-methyltransferase SAT18, the acetyltransferase SAT19, and the Cys6-type zinc finger SAT20, the latter being probably involved in regulation of SC3 expression. In Stachybotrys chartarum (strain CBS 109288 / IBT 7711) (Toxic black mold), this protein is Putative O-acetyltransferase SAT14.